The chain runs to 80 residues: Lantibiotic Flvalpha.a (80 aa).

The propeptide at 1-38 is cleaved by FlvT; it reads MNKNPIYRSEEEAKDIACGNVAAELDENSQALDAINGA. 2,3-didehydrobutyrine; by FlvM1 is present on residues T43 and T47. The segment at residues 52 to 55 is a cross-link (beta-methyllanthionine (Thr-Cys); by FlvM1); that stretch reads TVGC. A cross-link (lanthionine (Ser-Cys); by FlvM1) is located at residues 58–68; sequence SYGLGNGGYCC. 2 consecutive cross-links (beta-methyllanthionine (Thr-Cys); by FlvM1) follow at residues 69–74 and 71–78; these read TYTVEC and TVECSKTC.

In terms of processing, the lanthionine formed by Ser-58 and Cys-68 forms a putative lipid II binding motif. Post-translationally, maturation of FlvA1 peptides involves the enzymatic conversion of Thr, and Ser into dehydrated AA and the formation of thioether bonds with cysteines. Modifications are processed by the flavecin synthetase FlvM1. This is followed by membrane translocation and cleavage of the modified precursor. Contains DL-lanthionine and DL-beta-methyllanthionine, when coepressed in E.coli with the flavecin synthetase FlvM1.

It localises to the secreted. Lanthionine-containing peptide antibiotic (lantibiotic) only active on Gram-positive bacteria in synergy with Flvbeta peptides, which are encoded by the same operon than Flvalpha.a. Shows antibacterial activity in synergy with Flvbeta.b, Flvbeta.c, Flvbeta.e and Flvbeta.g. Does not show antibacterial activity when tested with Flvbeta.a, Flvbeta.d, Flvbeta.f and Flvbeta.h. The bactericidal activity of lantibiotics is based on depolarization of energized bacterial cytoplasmic membranes, initiated by the formation of aqueous transmembrane pores. This is Lantibiotic Flvalpha.a from Ruminococcus flavefaciens.